The following is a 209-amino-acid chain: ATP synthase subunit delta (209 aa).

This sequence belongs to the ATPase delta chain family. F-type ATPases have 2 components, F(1) - the catalytic core - and F(0) - the membrane proton channel. F(1) has five subunits: alpha(3), beta(3), gamma(1), delta(1), epsilon(1). F(0) has three main subunits: a(1), b(2) and c(10-14). The alpha and beta chains form an alternating ring which encloses part of the gamma chain. F(1) is attached to F(0) by a central stalk formed by the gamma and epsilon chains, while a peripheral stalk is formed by the delta and b chains.

Its subcellular location is the cell inner membrane. Functionally, f(1)F(0) ATP synthase produces ATP from ADP in the presence of a proton or sodium gradient. F-type ATPases consist of two structural domains, F(1) containing the extramembraneous catalytic core and F(0) containing the membrane proton channel, linked together by a central stalk and a peripheral stalk. During catalysis, ATP synthesis in the catalytic domain of F(1) is coupled via a rotary mechanism of the central stalk subunits to proton translocation. In terms of biological role, this protein is part of the stalk that links CF(0) to CF(1). It either transmits conformational changes from CF(0) to CF(1) or is implicated in proton conduction. This chain is ATP synthase subunit delta, found in Psychrobacter sp. (strain PRwf-1).